Reading from the N-terminus, the 446-residue chain is Calcium-binding and coiled-coil domain-containing protein 2 (446 aa).

The CLIR signature appears at Ile133–Val136. Positions Thr137 to Met349 form a coiled coil. The LIR-like signature appears at Asp203–Glu206. The interaction with LGALS8 stretch occupies residues Asn371–Ser381. Residues Lys395–Leu446 are interaction with MYO6. A UBZ1-type zinc finger spans residues Cys419–His444. Zn(2+) contacts are provided by Cys422, Cys425, His440, and His444. Ser445 carries the post-translational modification Phosphoserine.

The protein belongs to the CALCOCO family. As to quaternary structure, dimer. Part of a complex consisting of CALCOCO2, TAX1BP1 and MYO6. Interacts with MYO6. Interacts with GEMIN4. Interacts with ATG8 family members MAP1LC3A, MAP1LC3B, GABARAP, GABARAPL1 and GABARAPL2. Interacts with ATG8 family member MAP1LC3C. Interacts with LGALS8. Interacts with TOM1; the interaction is indirect and is mediated by MYO6, which acts as a bridge between TOM1 and CALCOCO2. Interacts with AZI2.

The protein resides in the cytoplasm. It localises to the perinuclear region. Its subcellular location is the cytoskeleton. It is found in the cytoplasmic vesicle. The protein localises to the autophagosome membrane. In terms of biological role, xenophagy-specific receptor required for autophagy-mediated intracellular bacteria degradation. Acts as an effector protein of galectin-sensed membrane damage that restricts the proliferation of infecting pathogens upon entry into the cytosol by targeting LGALS8-associated bacteria for autophagy. Initially orchestrates bacteria targeting to autophagosomes and subsequently ensures pathogen degradation by regulating pathogen-containing autophagosome maturation. Bacteria targeting to autophagosomes relies on its interaction with MAP1LC3A, MAP1LC3B and/or GABARAPL2, whereas regulation of pathogen-containing autophagosome maturation requires the interaction with MAP3LC3C. May play a role in ruffle formation and actin cytoskeleton organization and seems to negatively regulate constitutive secretion. In Pongo abelii (Sumatran orangutan), this protein is Calcium-binding and coiled-coil domain-containing protein 2.